The following is a 471-amino-acid chain: MPGNQQKPESLETDSDTSPSCGLSDLSRGGSLESRCSSSRSRSFTMDDESLKHLTHEEKDVILFFEETLDSLEYDFDEPALCDSGIHCHSPQSLEESPSSHSEPEDVIDLVQPAPASGEAESLPDMPQVTGAPSDTKHGTPFLEGGKQAAENSLPPPDSRGPEVFPLPPSLPVPAPSAPRKELMSPSPPAEHPKLLRSVPTPLVIAQKISEKLAGNEALSPTSPSKEGRPGEWRTPTSPASRNGDHVGVWHRHTTQSAPKVHRFPSNISVTNSAGKDFNKTISKAAVNVQERKAQVLANINGMSFIAAGDTSSEERWQKAEEQRSGSADGARTLGRAGMAGEPGAPCAGVPARAQQSRAVQTEQPPALANGFQSVHEALRSEPSSFVPTSKTITFRPDPAVTGKLARQNASRSLYEPRPDGSQDARKRTGSLPRAVGFRPQGITVQFSGRGSTEEARREALRKLGLLKENL.

Disordered regions lie at residues 1–46 (MPGN…SFTM) and 82–247 (CDSG…GDHV). The span at 26–43 (LSRGGSLESRCSSSRSRS) shows a compositional bias: low complexity. Position 43 is a phosphoserine (Ser43). The residue at position 45 (Thr45) is a Phosphothreonine. A compositionally biased stretch (low complexity) spans 90-101 (SPQSLEESPSSH). Pro residues predominate over residues 154–177 (LPPPDSRGPEVFPLPPSLPVPAPS). Ser187, Ser220, and Ser223 each carry phosphoserine. At Arg263 the chain carries Asymmetric dimethylarginine; alternate. Arg263 bears the Omega-N-methylarginine; alternate mark. Disordered regions lie at residues 310-365 (DTSS…TEQP) and 383-437 (PSSF…RAVG). Residues 313-324 (SEERWQKAEEQR) show a composition bias toward basic and acidic residues. Polar residues-rich tracts occupy residues 354–364 (AQQSRAVQTEQ) and 383–393 (PSSFVPTSKTI). Basic and acidic residues predominate over residues 415-427 (YEPRPDGSQDARK). Residue Ser431 is modified to Phosphoserine. An Omega-N-methylarginine modification is found at Arg450.

This chain is Proline and serine-rich protein 2 (Proser2), found in Mus musculus (Mouse).